The primary structure comprises 372 residues: UDP-N-acetylglucosamine--N-acetylmuramyl-(pentapeptide) pyrophosphoryl-undecaprenol N-acetylglucosamine transferase (372 aa).

UDP-N-acetyl-alpha-D-glucosamine is bound by residues 16–18 (TGG), Asn-128, Arg-164, Ser-192, Ile-250, and Gln-295.

Belongs to the glycosyltransferase 28 family. MurG subfamily.

The protein resides in the cell inner membrane. It catalyses the reaction di-trans,octa-cis-undecaprenyl diphospho-N-acetyl-alpha-D-muramoyl-L-alanyl-D-glutamyl-meso-2,6-diaminopimeloyl-D-alanyl-D-alanine + UDP-N-acetyl-alpha-D-glucosamine = di-trans,octa-cis-undecaprenyl diphospho-[N-acetyl-alpha-D-glucosaminyl-(1-&gt;4)]-N-acetyl-alpha-D-muramoyl-L-alanyl-D-glutamyl-meso-2,6-diaminopimeloyl-D-alanyl-D-alanine + UDP + H(+). It participates in cell wall biogenesis; peptidoglycan biosynthesis. In terms of biological role, cell wall formation. Catalyzes the transfer of a GlcNAc subunit on undecaprenyl-pyrophosphoryl-MurNAc-pentapeptide (lipid intermediate I) to form undecaprenyl-pyrophosphoryl-MurNAc-(pentapeptide)GlcNAc (lipid intermediate II). The sequence is that of UDP-N-acetylglucosamine--N-acetylmuramyl-(pentapeptide) pyrophosphoryl-undecaprenol N-acetylglucosamine transferase from Paraburkholderia xenovorans (strain LB400).